We begin with the raw amino-acid sequence, 90 residues long: Succinate dehydrogenase subunit 7, mitochondrial (90 aa).

The transit peptide at 1–41 (MAQPAFLSALRSRLRSPQPQAPALPHLQPPRRGFHVELGAR) directs the protein to the mitochondrion.

In terms of assembly, component of complex II composed of eight subunits in plants: four classical SDH subunits SDH1, SDH2, SDH3 and SDH4 (a flavoprotein (FP), an iron-sulfur protein (IP), and a cytochrome b composed of a large and a small subunit.), as well as four subunits unknown in mitochondria from bacteria and heterotrophic eukaryotes.

It is found in the mitochondrion inner membrane. It participates in carbohydrate metabolism; tricarboxylic acid cycle. This chain is Succinate dehydrogenase subunit 7, mitochondrial, found in Oryza sativa subsp. japonica (Rice).